A 238-amino-acid polypeptide reads, in one-letter code: MGKNLLQQRAGKGSPTFRSPSWLRIGKVRYPNIFGHLVGKVIDIVHNPGMNTPVAIIKLENGTKFLTQAIQGLVINQKIEFGKGSPIANGNVIEIGDAPEGTIVCNVEENFGDGGKYARSAGSYAVVVGKSGDKVLIKLPSDKIKAVSNKARATVGVVAGGGVVEKPLLKAGANYWKYKVKAKKWPIVRGVAMNVVDHPHGGGLHQSVSRPSTVSRNAPPGRKVGHIAARRTGRKEGK.

The disordered stretch occupies residues 200–238 (HGGGLHQSVSRPSTVSRNAPPGRKVGHIAARRTGRKEGK). A compositionally biased stretch (polar residues) spans 206 to 216 (QSVSRPSTVSR). The segment covering 223-238 (KVGHIAARRTGRKEGK) has biased composition (basic residues).

This sequence belongs to the universal ribosomal protein uL2 family. As to quaternary structure, part of the 50S ribosomal subunit. Forms a bridge to the 30S subunit in the 70S ribosome.

Functionally, one of the primary rRNA binding proteins. Required for association of the 30S and 50S subunits to form the 70S ribosome, for tRNA binding and peptide bond formation. It has been suggested to have peptidyltransferase activity; this is somewhat controversial. Makes several contacts with the 16S rRNA in the 70S ribosome. This chain is Large ribosomal subunit protein uL2, found in Saccharolobus islandicus (strain Y.N.15.51 / Yellowstone #2) (Sulfolobus islandicus).